A 253-amino-acid polypeptide reads, in one-letter code: Transcription factor bHLH106 (253 aa).

The bHLH domain occupies 66 to 115 (AALRNHKEAERRRRERINSHLNKLRNVLSCNSKTDKATLLAKVVQRVREL).

As to quaternary structure, homodimer.

Its subcellular location is the nucleus. The sequence is that of Transcription factor bHLH106 (BHLH106) from Arabidopsis thaliana (Mouse-ear cress).